The following is an 893-amino-acid chain: Alpha-actinin-1 (893 aa).

Positions 1 to 248 (MDHHYDPQQT…IMTYVSSFYH (248 aa)) are actin-binding. At Tyr-13 the chain carries Phosphotyrosine; by FAK1. Calponin-homology (CH) domains follow at residues 32–136 (KQQR…LRFA) and 145–251 (TSAK…HAFS). Spectrin repeat units lie at residues 275–385 (QLME…WLLN), 395–500 (HLAE…ALER), 510–621 (QLYL…ALME), and 631–734 (RLRK…EVEN). 2 consecutive EF-hand domains span residues 747–782 (EQMNEFRASFNHFDRDHSGTLGPEEFKACLISLGYD) and 788–823 (QGEAEFARIMSIVDPNRMGVVTFQAFIDFMSRETAD). The Ca(2+) site is built by Asp-760, Asp-762, Ser-764, Thr-766, and Glu-771.

Belongs to the alpha-actinin family. Homodimer; antiparallel. Interacts with PDLIM4 (via PDZ domain).

It is found in the cytoplasm. The protein localises to the cytoskeleton. It localises to the myofibril. Its subcellular location is the sarcomere. The protein resides in the z line. It is found in the cell membrane. The protein localises to the cell junction. It localises to the cell projection. Its subcellular location is the ruffle. F-actin cross-linking protein is thought to anchor actin to a variety of intracellular structures. This is a bundling protein. The sequence is that of Alpha-actinin-1 (ACTN1) from Gallus gallus (Chicken).